The primary structure comprises 272 residues: 2-C-methyl-D-erythritol 4-phosphate cytidylyltransferase (272 aa).

It belongs to the IspD/TarI cytidylyltransferase family. IspD subfamily.

The enzyme catalyses 2-C-methyl-D-erythritol 4-phosphate + CTP + H(+) = 4-CDP-2-C-methyl-D-erythritol + diphosphate. It functions in the pathway isoprenoid biosynthesis; isopentenyl diphosphate biosynthesis via DXP pathway; isopentenyl diphosphate from 1-deoxy-D-xylulose 5-phosphate: step 2/6. Functionally, catalyzes the formation of 4-diphosphocytidyl-2-C-methyl-D-erythritol from CTP and 2-C-methyl-D-erythritol 4-phosphate (MEP). The polypeptide is 2-C-methyl-D-erythritol 4-phosphate cytidylyltransferase (Xanthomonas oryzae pv. oryzae (strain MAFF 311018)).